The following is a 156-amino-acid chain: dCTP deaminase (156 aa).

Residues 79 to 84 (RSTFAR), Asp95, Gln124, and Tyr138 contribute to the dCTP site.

It belongs to the dCTP deaminase family. Homotrimer.

It carries out the reaction dCTP + H2O + H(+) = dUTP + NH4(+). The protein operates within pyrimidine metabolism; dUMP biosynthesis; dUMP from dCTP (dUTP route): step 1/2. In terms of biological role, catalyzes the deamination of dCTP to dUTP. This chain is dCTP deaminase, found in Thermococcus sibiricus (strain DSM 12597 / MM 739).